A 505-amino-acid chain; its full sequence is Mannosyl-oligosaccharide alpha-1,2-mannosidase 1B (505 aa).

Positions 1–16 are cleaved as a signal peptide; the sequence is MRTLLALAALAGFAAA. Asparagine 88 and asparagine 174 each carry an N-linked (GlcNAc...) asparagine glycan. A disulfide bridge links cysteine 325 with cysteine 354. A glycan (N-linked (GlcNAc...) asparagine) is linked at asparagine 359. Glutamate 368 acts as the Proton donor in catalysis. Residue threonine 494 participates in Ca(2+) binding.

Belongs to the glycosyl hydrolase 47 family. Monomer. Ca(2+) serves as cofactor. Mg(2+) is required as a cofactor.

The protein localises to the cytoplasmic vesicle lumen. The catalysed reaction is N(4)-(alpha-D-Man-(1-&gt;2)-alpha-D-Man-(1-&gt;2)-alpha-D-Man-(1-&gt;3)-[alpha-D-Man-(1-&gt;2)-alpha-D-Man-(1-&gt;3)-[alpha-D-Man-(1-&gt;2)-alpha-D-Man-(1-&gt;6)]-alpha-D-Man-(1-&gt;6)]-beta-D-Man-(1-&gt;4)-beta-D-GlcNAc-(1-&gt;4)-beta-D-GlcNAc)-L-asparaginyl-[protein] (N-glucan mannose isomer 9A1,2,3B1,2,3) + 4 H2O = N(4)-(alpha-D-Man-(1-&gt;3)-[alpha-D-Man-(1-&gt;3)-[alpha-D-Man-(1-&gt;6)]-alpha-D-Man-(1-&gt;6)]-beta-D-Man-(1-&gt;4)-beta-D-GlcNAc-(1-&gt;4)-beta-D-GlcNAc)-L-asparaginyl-[protein] (N-glucan mannose isomer 5A1,2) + 4 beta-D-mannose. The enzyme catalyses N(4)-(alpha-D-Man-(1-&gt;2)-alpha-D-Man-(1-&gt;2)-alpha-D-Man-(1-&gt;3)-[alpha-D-Man-(1-&gt;3)-[alpha-D-Man-(1-&gt;2)-alpha-D-Man-(1-&gt;6)]-alpha-D-Man-(1-&gt;6)]-beta-D-Man-(1-&gt;4)-beta-D-GlcNAc-(1-&gt;4)-beta-D-GlcNAc)-L-asparaginyl-[protein] (N-glucan mannose isomer 8A1,2,3B1,3) + 3 H2O = N(4)-(alpha-D-Man-(1-&gt;3)-[alpha-D-Man-(1-&gt;3)-[alpha-D-Man-(1-&gt;6)]-alpha-D-Man-(1-&gt;6)]-beta-D-Man-(1-&gt;4)-beta-D-GlcNAc-(1-&gt;4)-beta-D-GlcNAc)-L-asparaginyl-[protein] (N-glucan mannose isomer 5A1,2) + 3 beta-D-mannose. It participates in protein modification; protein glycosylation. Functionally, involved in the maturation of Asn-linked oligosaccharides. Progressively trims alpha-1,2-linked mannose residues from Man(9)GlcNAc(2) to produce Man(5)GlcNAc(2). The polypeptide is Mannosyl-oligosaccharide alpha-1,2-mannosidase 1B (mns1B) (Emericella nidulans (strain FGSC A4 / ATCC 38163 / CBS 112.46 / NRRL 194 / M139) (Aspergillus nidulans)).